Consider the following 251-residue polypeptide: MSSVTMKELLEAGVHFGHQTKRWNPKMKPYIFGARNGIYIIDLQKTVRLFKNAYSFVRECAQSGETILFVGTKKQAQDAIGEEASRCNMYYVNQRWLGGMLTNFATVKQSIDRLKRLDAMFADGTVEAYTKKEALQLEKERQKLEKTLGGIKGMGKVPGALFVIDPKNETIAINEAKKLGIPVVAVVDTNCDPDPIDYVIPGNDDAIRAIRLLTSKMADAVLEGAQARDAQLQTGEEEMAAAEGESEQVEA.

The disordered stretch occupies residues 232-251 (LQTGEEEMAAAEGESEQVEA). The segment covering 235–251 (GEEEMAAAEGESEQVEA) has biased composition (acidic residues).

The protein belongs to the universal ribosomal protein uS2 family.

In Geobacter metallireducens (strain ATCC 53774 / DSM 7210 / GS-15), this protein is Small ribosomal subunit protein uS2.